The following is an 83-amino-acid chain: Cytotoxin homolog 5 (83 aa).

Residues 1–21 form the signal peptide; it reads MKTLLLTMVVVTIVCLDLGYT. Cystine bridges form between C24–C43, C36–C61, C65–C76, and C77–C82.

The protein belongs to the three-finger toxin family. Short-chain subfamily. Orphan group XV sub-subfamily. Expressed by the venom gland.

The protein resides in the secreted. It localises to the target cell membrane. Functionally, has low cytotoxic activity. This chain is Cytotoxin homolog 5, found in Naja atra (Chinese cobra).